Consider the following 587-residue polypeptide: Thioredoxin domain-containing protein 3 (587 aa).

The region spanning Ala-2 to Lys-119 is the Thioredoxin domain. Residues Cys-39 and Cys-42 are joined by a disulfide bond. NDK stretches follow at residues Met-157–Glu-255, Val-313–Ala-453, and Leu-454–Asn-587.

In the C-terminal section; belongs to the NDK family. As to quaternary structure, monomer. As to expression, testis-specific.

Its subcellular location is the cytoplasm. Probably required during the final stages of sperm tail maturation in the testis and/or epididymis, where extensive disulfide bonding of fibrous sheath (FS) proteins occurs. In vitro, it has neither nucleoside diphosphate kinase (NDPK) activity nor reducing activity on disulfide bonds. Exhibits a 3'-5' exonuclease activity with a preference for single-stranded DNA, suggesting roles in DNA proofreading and repair. The chain is Thioredoxin domain-containing protein 3 (Nme8) from Rattus norvegicus (Rat).